A 521-amino-acid polypeptide reads, in one-letter code: DNA damage-binding protein cmr1 (521 aa).

The tract at residues 36–75 is disordered; sequence DKIIPKPAPPKPKRASTPRVKREPVKKEAARPTRQSSRLA. Positions 55–66 are enriched in basic and acidic residues; it reads VKREPVKKEAAR. WD repeat units lie at residues 183 to 224, 242 to 282, 333 to 373, 382 to 422, and 490 to 521; these read IVPQ…PKIE, THSR…STEI, LTDH…GKGD, EHES…EWKA, and DGIT…CLWM.

Belongs to the WD repeat DDB2/WDR76 family.

DNA-binding protein that binds to both single- and double-stranded DNA. Binds preferentially to UV-damaged DNA. May be involved in DNA-metabolic processes. The chain is DNA damage-binding protein cmr1 from Neurospora crassa (strain ATCC 24698 / 74-OR23-1A / CBS 708.71 / DSM 1257 / FGSC 987).